The primary structure comprises 360 residues: UDP-N-acetylglucosamine--N-acetylmuramyl-(pentapeptide) pyrophosphoryl-undecaprenol N-acetylglucosamine transferase (360 aa).

The UDP-N-acetyl-alpha-D-glucosamine site is built by Ser198 and Gln289.

The protein belongs to the glycosyltransferase 28 family. MurG subfamily.

Its subcellular location is the cell membrane. It carries out the reaction Mur2Ac(oyl-L-Ala-gamma-D-Glu-L-Lys-D-Ala-D-Ala)-di-trans,octa-cis-undecaprenyl diphosphate + UDP-N-acetyl-alpha-D-glucosamine = beta-D-GlcNAc-(1-&gt;4)-Mur2Ac(oyl-L-Ala-gamma-D-Glu-L-Lys-D-Ala-D-Ala)-di-trans,octa-cis-undecaprenyl diphosphate + UDP + H(+). Its pathway is cell wall biogenesis; peptidoglycan biosynthesis. In terms of biological role, cell wall formation. Catalyzes the transfer of a GlcNAc subunit on undecaprenyl-pyrophosphoryl-MurNAc-pentapeptide (lipid intermediate I) to form undecaprenyl-pyrophosphoryl-MurNAc-(pentapeptide)GlcNAc (lipid intermediate II). In Streptococcus pyogenes serotype M18 (strain MGAS8232), this protein is UDP-N-acetylglucosamine--N-acetylmuramyl-(pentapeptide) pyrophosphoryl-undecaprenol N-acetylglucosamine transferase.